The sequence spans 318 residues: TPR repeat-containing protein MJ0940 (318 aa).

TPR repeat units follow at residues 17–50, 84–117, 119–151, 152–185, 186–219, 221–254, 255–288, and 289–318; these read SLTY…NPDF, PVAY…EEKF, TAFF…APNF, IPAY…KEND, TNAI…LNVT, IEVI…RPDD, ASLW…MPHH, and TKAL…ALDR.

This is TPR repeat-containing protein MJ0940 from Methanocaldococcus jannaschii (strain ATCC 43067 / DSM 2661 / JAL-1 / JCM 10045 / NBRC 100440) (Methanococcus jannaschii).